Here is a 357-residue protein sequence, read N- to C-terminus: MSNTNFFNDDWLELQRKYWDNWTDMSRKAMGLDSASSSATTPWEAAIDQWWKAMAPAAPDLSRSFMEKMMEQGKNFFRLADTFAKRADEGNAGNGLELWTKTLEDMQKRFSGSLDDGGNTMQRLMSFWELPLDNWQRMMSSMSPMPGDMLRNMPHEQFKDSLDRALSAPGLGYTREEQSQYQELMRSAMEYQAALQEYTNVYTKLGMKSVEHMGSYIQGVIDSGKTIDSARALYDNWVACCEGAYADEVATPEYARIHGRLVNAQMALKKRMSILVDENLGALNMPTRSELRTLQDRLQETRRENKALRHSLHSLERRVAALAGEEPATKPATALRSPAPAAKAPARRRTTKTNPAD.

Positions Ala-320–Asp-357 are disordered. A compositionally biased stretch (low complexity) spans Pro-331–Ala-344.

It belongs to the PHA/PHB synthase family. Type III PhaE subfamily. In terms of assembly, a large complex of PhaC and PhaE; the ratio of the subunits has been estimated to be from 1:1 to 4:1, with more PhaE than PhaC.

The protein resides in the cytoplasm. It functions in the pathway biopolymer metabolism; poly-(R)-3-hydroxybutanoate biosynthesis. Functionally, polymerizes D(-)-3-hydroxybutyryl-CoA to create polyhydroxybutyrate (PHB) which consists of thousands of hydroxybutyrate molecules linked end to end. This subunit has no catalytic activity but enhances the activity of PhaC, the catalytic subunit, 100-fold. In Allochromatium vinosum (strain ATCC 17899 / DSM 180 / NBRC 103801 / NCIMB 10441 / D) (Chromatium vinosum), this protein is Poly(3-hydroxyalkanoate) polymerase subunit PhaE.